The chain runs to 68 residues: Large ribosomal subunit protein eL24 (68 aa).

Zn(2+) is bound by residues Cys7, Cys10, Cys33, and Cys37. The segment at 7–37 (CSYCGREFEPGTGKMFVRNDGRVLFFCSSKC) adopts a C4-type zinc-finger fold.

Belongs to the eukaryotic ribosomal protein eL24 family. Part of the 50S ribosomal subunit. Forms a cluster with proteins L3 and L14. It depends on Zn(2+) as a cofactor.

Its function is as follows. Binds to the 23S rRNA. The sequence is that of Large ribosomal subunit protein eL24 from Thermococcus onnurineus (strain NA1).